A 334-amino-acid polypeptide reads, in one-letter code: Anthranilate phosphoribosyltransferase (334 aa).

Residues G79, 82–83, S87, 89–92, 107–115, and S119 contribute to the 5-phospho-alpha-D-ribose 1-diphosphate site; these read GD, NIST, and KHGNRSISS. G79 is a binding site for anthranilate. S91 contacts Mg(2+). N110 contacts anthranilate. R165 is an anthranilate binding site. The Mg(2+) site is built by D224 and E225.

This sequence belongs to the anthranilate phosphoribosyltransferase family. As to quaternary structure, homodimer. It depends on Mg(2+) as a cofactor.

It carries out the reaction N-(5-phospho-beta-D-ribosyl)anthranilate + diphosphate = 5-phospho-alpha-D-ribose 1-diphosphate + anthranilate. It functions in the pathway amino-acid biosynthesis; L-tryptophan biosynthesis; L-tryptophan from chorismate: step 2/5. In terms of biological role, catalyzes the transfer of the phosphoribosyl group of 5-phosphorylribose-1-pyrophosphate (PRPP) to anthranilate to yield N-(5'-phosphoribosyl)-anthranilate (PRA). This is Anthranilate phosphoribosyltransferase from Streptococcus gordonii (strain Challis / ATCC 35105 / BCRC 15272 / CH1 / DL1 / V288).